We begin with the raw amino-acid sequence, 420 residues long: Histidine--tRNA ligase, chloroplastic (420 aa).

Belongs to the class-II aminoacyl-tRNA synthetase family.

It localises to the plastid. It is found in the chloroplast. The enzyme catalyses tRNA(His) + L-histidine + ATP = L-histidyl-tRNA(His) + AMP + diphosphate + H(+). The sequence is that of Histidine--tRNA ligase, chloroplastic from Gracilaria tenuistipitata var. liui (Red alga).